A 346-amino-acid polypeptide reads, in one-letter code: Outer membrane protein A (346 aa).

The first 21 residues, 1–21 (MKKTAIAIAVALAGFATVAQA), serve as a signal peptide directing secretion. 8 consecutive transmembrane segments (beta stranded) span residues 27–37 (TWYTGAKLGWS), 55–66 (QLGAGAFGGYQV), 70–78 (VGFEMGYDW), 96–107 (QGVQLTAKLGYP), 112–120 (LDIYTRLGG), 142–151 (PVFAGGVEYA), 156–163 (IATRLEYQ), and 182–190 (MLSLGVSYR). The hinge-like stretch occupies residues 197–208 (APVVAPAPAPAP). 4 repeat units span residues 201-202 (AP), 203-204 (AP), 205-206 (AP), and 207-208 (AP). Residues 201–208 (APAPAPAP) are 4 X 2 AA tandem repeats of A-P. One can recognise an OmpA-like domain in the interval 210 to 338 (VQTKHFTLKS…RVEIEVKGIK (129 aa)). An intrachain disulfide couples C311 to C323.

Belongs to the outer membrane OOP (TC 1.B.6) superfamily. OmpA family. As to quaternary structure, monomer and homodimer.

Its subcellular location is the cell outer membrane. Functionally, with TolR probably plays a role in maintaining the position of the peptidoglycan cell wall in the periplasm. Acts as a porin with low permeability that allows slow penetration of small solutes; an internal gate slows down solute passage. Its function is as follows. Required for conjugation with F-type plasmids; probably serves as the mating receptor on recipient cells. This Escherichia coli O157:H7 protein is Outer membrane protein A.